A 95-amino-acid chain; its full sequence is Mitochondrial import inner membrane translocase subunit Tim13 (95 aa).

Position 1 is an N-acetylmethionine (Met-1). Phosphoserine is present on Ser-7. The short motif at Cys-46 to Cys-69 is the Twin CX3C motif element. 2 cysteine pairs are disulfide-bonded: Cys-46–Cys-69 and Cys-50–Cys-65. The residue at position 53 (Lys-53) is an N6-succinyllysine.

The protein belongs to the small Tim family. As to quaternary structure, heterohexamer; composed of 3 copies of TIMM8 (TIMM8A or TIMM8B) and 3 copies of TIMM13, named soluble 70 kDa complex. Associates with the TIM22 complex, whose core is composed of TIMM22. Present at high level in liver and brain, and at lower level in muscle and heart. In CNS sections, it is predominantly present in the soma and the dendritic portion of the Purkinje cells of the cerebellum, but not in the glial cells. Scattered expression also is also detected in the brain stem, olfactory bulb, substantia nigra, hippocampus and striatum (at protein level).

It localises to the mitochondrion inner membrane. In terms of biological role, mitochondrial intermembrane chaperone that participates in the import and insertion of some multi-pass transmembrane proteins into the mitochondrial inner membrane. Also required for the transfer of beta-barrel precursors from the TOM complex to the sorting and assembly machinery (SAM complex) of the outer membrane. Acts as a chaperone-like protein that protects the hydrophobic precursors from aggregation and guide them through the mitochondrial intermembrane space. The TIMM8-TIMM13 complex mediates the import of proteins such as TIMM23, SLC25A12/ARALAR1 and SLC25A13/ARALAR2, while the predominant TIMM9-TIMM10 70 kDa complex mediates the import of much more proteins. The chain is Mitochondrial import inner membrane translocase subunit Tim13 (Timm13) from Mus musculus (Mouse).